Here is a 514-residue protein sequence, read N- to C-terminus: Putative selenium-binding protein (514 aa).

The protein belongs to the selenium-binding protein family.

The sequence is that of Putative selenium-binding protein from Caenorhabditis briggsae.